A 123-amino-acid polypeptide reads, in one-letter code: uncharacterized protein (123 aa).

Helical transmembrane passes span V53 to L73 and V75 to H95.

The protein resides in the membrane. This is an uncharacterized protein from Saccharomyces cerevisiae (strain ATCC 204508 / S288c) (Baker's yeast).